A 491-amino-acid chain; its full sequence is Cyclin-B1-5 (491 aa).

Residues 275 to 347 enclose the Cyclin N-terminal domain; it reads DMYSFYKEVE…VKAVPKRELQ (73 aa).

Belongs to the cyclin family. Cyclin AB subfamily. In terms of tissue distribution, expressed in roots, stems and flowers.

This is Cyclin-B1-5 (CYCB1-5) from Arabidopsis thaliana (Mouse-ear cress).